The primary structure comprises 615 residues: Erythritol-mannosyl-transferase 1 (615 aa).

Residues 366–387 (RTPNNTGASTPTAPISSPDFEE) are disordered. Positions 367-380 (TPNNTGASTPTAPI) are enriched in polar residues.

Belongs to the UDP-glycosyltransferase family.

The protein localises to the vacuole membrane. Its pathway is secondary metabolite biosynthesis. Functionally, erythritol-mannosyl-transferase; part of the gene cluster that mediates the biosynthesis of mannosylerythritol lipids (MELs), surface-active substances that enhance the availability of water-insoluble substrates. Mannosylerythritol lipid production is responsible for hemolytic activity of Ustilago maydis. Depending on the number of acetyl groups, mannosylerythritol lipids can be differentiated into MEL A (fully acetylated), MEL B and MEL C (monoacetylated at R-6 and R-4, respectively), and the fully deacetylated MEL D. The first step in the pathway is the generation of mannosylerythritol by the glycosyltransferase EMT1 which catalyzes the transfer of GDP-mannose to the C-4 atom of meso-erythritol. This reaction has to be stereospecific, since only mannosyl-D-erythritol is generated. The produced disaccharide is subsequently acylated with fatty acids of various lengths derived from the peroxisomal beta-oxidation by the peroxisomal acyltransferases MAC1 and MAC2 at positions C-2 and C-3, repectively. The existence of MEL derivatives which carry an acetyl group at C-2 implies that at least MAC1 also accepts acetyl-CoA as a donor. The final step of MEL biosynthesis is the acetylation of the fully acylated mannosylerythritol lipids catalyzed by the acetyl-CoA-dependent acetyltransferase MAT1. MAT1 displays a relaxed regioselectivity and is able to transfer acetylgroups to both positions C-4 and C-6 of the mannosyl moiety. The protein is Erythritol-mannosyl-transferase 1 of Mycosarcoma maydis (Corn smut fungus).